The primary structure comprises 162 residues: Phosphopantetheine adenylyltransferase (162 aa).

Ser9 serves as a coordination point for substrate. ATP-binding positions include 9–10 and His17; that span reads SF. Residues Lys41, Thr73, and Arg87 each contribute to the substrate site. Residues 88–90, Glu98, and 123–129 contribute to the ATP site; these read GLR and YSFISSS.

Belongs to the bacterial CoaD family. As to quaternary structure, homohexamer. The cofactor is Mg(2+).

The protein localises to the cytoplasm. It carries out the reaction (R)-4'-phosphopantetheine + ATP + H(+) = 3'-dephospho-CoA + diphosphate. It functions in the pathway cofactor biosynthesis; coenzyme A biosynthesis; CoA from (R)-pantothenate: step 4/5. In terms of biological role, reversibly transfers an adenylyl group from ATP to 4'-phosphopantetheine, yielding dephospho-CoA (dPCoA) and pyrophosphate. The polypeptide is Phosphopantetheine adenylyltransferase (Carboxydothermus hydrogenoformans (strain ATCC BAA-161 / DSM 6008 / Z-2901)).